We begin with the raw amino-acid sequence, 122 residues long: Large ribosomal subunit protein uL14 (122 aa).

This sequence belongs to the universal ribosomal protein uL14 family. Part of the 50S ribosomal subunit. Forms a cluster with proteins L3 and L19. In the 70S ribosome, L14 and L19 interact and together make contacts with the 16S rRNA in bridges B5 and B8.

In terms of biological role, binds to 23S rRNA. Forms part of two intersubunit bridges in the 70S ribosome. The sequence is that of Large ribosomal subunit protein uL14 from Francisella philomiragia subsp. philomiragia (strain ATCC 25017 / CCUG 19701 / FSC 153 / O#319-036).